The following is a 134-amino-acid chain: Cytochrome b (134 aa).

The next 3 membrane-spanning stretches (helical) occupy residues 33 to 53 (FGSL…FLAM), 77 to 98 (WLLR…YLHV), and 113 to 133 (WNIG…GYVL). Residues histidine 83 and histidine 97 each contribute to the heme b site.

The protein belongs to the cytochrome b family. As to quaternary structure, the cytochrome bc1 complex contains 11 subunits: 3 respiratory subunits (MT-CYB, CYC1 and UQCRFS1), 2 core proteins (UQCRC1 and UQCRC2) and 6 low-molecular weight proteins (UQCRH/QCR6, UQCRB/QCR7, UQCRQ/QCR8, UQCR10/QCR9, UQCR11/QCR10 and a cleavage product of UQCRFS1). This cytochrome bc1 complex then forms a dimer. The cofactor is heme b.

The protein resides in the mitochondrion inner membrane. Component of the ubiquinol-cytochrome c reductase complex (complex III or cytochrome b-c1 complex) that is part of the mitochondrial respiratory chain. The b-c1 complex mediates electron transfer from ubiquinol to cytochrome c. Contributes to the generation of a proton gradient across the mitochondrial membrane that is then used for ATP synthesis. The sequence is that of Cytochrome b (MT-CYB) from Chiroderma salvini (Salvin's big-eyed bat).